Consider the following 748-residue polypeptide: Pentatricopeptide repeat-containing protein At3g13880 (748 aa).

PPR repeat units lie at residues 46-80, 81-111, 112-146, 147-181, 182-212, 213-247, 248-285, 286-316, 317-356, 357-391, 392-422, 423-457, 458-492, 493-523, 524-558, 559-589, and 595-629; these read DSEG…SLNP, CLYL…MPER, NIIS…NLKL, DKFT…GLSQ, QVFL…CDER, DQVS…GLNL, TTYA…GMEF, DIVV…MPSK, NVVT…GLEP, SPST…NFQS, DEFI…TSKQ, DIAS…HIRP, EEYT…GIDA, FTSV…VQNP, DVAT…GIKP, NQQA…MKND, and NEKH…DHPV. The type E motif stretch occupies residues 630-705; sequence TWRALLSSCR…EPALSWIVIG (76 aa). A type E(+) motif region spans residues 706 to 736; sequence NQTHSFAVADLSHPSSQMIYTMLETMDNVDF.

Belongs to the PPR family. PCMP-E subfamily.

This Arabidopsis thaliana (Mouse-ear cress) protein is Pentatricopeptide repeat-containing protein At3g13880 (PCMP-E89).